The following is a 225-amino-acid chain: Protein-L-isoaspartate O-methyltransferase (225 aa).

Residue Ser75 is part of the active site.

It belongs to the methyltransferase superfamily. L-isoaspartyl/D-aspartyl protein methyltransferase family.

It is found in the cytoplasm. It catalyses the reaction [protein]-L-isoaspartate + S-adenosyl-L-methionine = [protein]-L-isoaspartate alpha-methyl ester + S-adenosyl-L-homocysteine. Its function is as follows. Catalyzes the methyl esterification of L-isoaspartyl residues in peptides and proteins that result from spontaneous decomposition of normal L-aspartyl and L-asparaginyl residues. It plays a role in the repair and/or degradation of damaged proteins. In Xanthomonas euvesicatoria pv. vesicatoria (strain 85-10) (Xanthomonas campestris pv. vesicatoria), this protein is Protein-L-isoaspartate O-methyltransferase.